The sequence spans 321 residues: Chemotaxis protein CheV1 (321 aa).

Residues 19–177 (ELQLLCFRLG…IEKMLIDVFP (159 aa)) form the CheW-like domain. Positions 198-319 (CVLLADDSPS…IQRVVKQFLE (122 aa)) constitute a Response regulatory domain. Residue Asp-252 is modified to 4-aspartylphosphate.

In terms of biological role, plays an essential role in chemotaxis signal transduction system in order to colonize the host stomach. May act as a phosphate sink to control the flow of phosphate to CheAY. In Helicobacter pylori (strain ATCC 700392 / 26695) (Campylobacter pylori), this protein is Chemotaxis protein CheV1.